Consider the following 90-residue polypeptide: Small ribosomal subunit protein bS20 (90 aa).

It belongs to the bacterial ribosomal protein bS20 family.

Binds directly to 16S ribosomal RNA. This chain is Small ribosomal subunit protein bS20, found in Rickettsia akari (strain Hartford).